A 326-amino-acid polypeptide reads, in one-letter code: MSSSRPLNGLSRLDAEDRSPYQRLSQRMLDISGDRGVLKDVIREGAGELVTPDASVLVKYSGYLEHMDKPFDSNCFRKTPRLMKLGEDITLWGMELGLLSMRRGELARFLFKPTYAYGTLGCPPLIPPNTTVLFEIELLDFLDSAESDKFCALSAEQQSQFPLQKVLKVAATEREFGNYLFRQNRFYDAKVRYKRALLLLHRRTAPPEEQHLVETAKLLVFLNLSFTYLKLERPTMALRYGEQALIIDRKNAKALFRCGQACLLMTEYQKARDFLVRAQREQPFNHDINNELKKLASYYRDYMDKEREMCHRMFASGDNGSTVGEN.

The 90-residue stretch at 53–142 folds into the PPIase FKBP-type domain; that stretch reads DASVLVKYSG…LFEIELLDFL (90 aa). TPR repeat units lie at residues 170 to 203, 218 to 251, and 252 to 285; these read AATE…LHRR, LLVF…DRKN, and AKAL…QPFN.

Belongs to the FKBP6 family. As to quaternary structure, interacts with HSP72/HSPA2 and CLTC. Interacts with GAPDH; leading to inhibit GAPDH catalytic activity. Interacts (via TPR repeats) with HSP90.

Its subcellular location is the cytoplasm. The protein localises to the cytosol. It localises to the nucleus. In terms of biological role, co-chaperone required during spermatogenesis to repress transposable elements and prevent their mobilization, which is essential for the germline integrity. Acts via the piRNA metabolic process, which mediates the repression of transposable elements during meiosis by forming complexes composed of piRNAs and Piwi proteins and govern the methylation and subsequent repression of transposons. Acts as a co-chaperone via its interaction with HSP90 and is required for the piRNA amplification process, the secondary piRNA biogenesis. May be required together with HSP90 in removal of 16 nucleotide ping-pong by-products from Piwi complexes, possibly facilitating turnover of Piwi complexes. The chain is Inactive peptidyl-prolyl cis-trans isomerase FKBP6 (FKBP6) from Bos taurus (Bovine).